The chain runs to 234 residues: Large ribosomal subunit protein uL1 (234 aa).

It belongs to the universal ribosomal protein uL1 family. Part of the 50S ribosomal subunit.

Functionally, binds directly to 23S rRNA. The L1 stalk is quite mobile in the ribosome, and is involved in E site tRNA release. Its function is as follows. Protein L1 is also a translational repressor protein, it controls the translation of the L11 operon by binding to its mRNA. This chain is Large ribosomal subunit protein uL1, found in Salmonella gallinarum (strain 287/91 / NCTC 13346).